The sequence spans 277 residues: Large ribosomal subunit protein uL2 (277 aa).

The disordered stretch occupies residues 222–277 (GVAMNPVDHPHGGGEGRTSGGRHPVSPWGKPTKGKRTRSNKATDKFIMRTRHQRKK).

Belongs to the universal ribosomal protein uL2 family. In terms of assembly, part of the 50S ribosomal subunit. Forms a bridge to the 30S subunit in the 70S ribosome.

Functionally, one of the primary rRNA binding proteins. Required for association of the 30S and 50S subunits to form the 70S ribosome, for tRNA binding and peptide bond formation. It has been suggested to have peptidyltransferase activity; this is somewhat controversial. Makes several contacts with the 16S rRNA in the 70S ribosome. This chain is Large ribosomal subunit protein uL2, found in Bartonella henselae (strain ATCC 49882 / DSM 28221 / CCUG 30454 / Houston 1) (Rochalimaea henselae).